The sequence spans 189 residues: Thymidine kinase (189 aa).

ATP contacts are provided by residues 9–16 (GTMNSGKS) and 85–88 (DEAQ). E86 acts as the Proton acceptor in catalysis. Zn(2+)-binding residues include C143, C146, C180, and H183.

Belongs to the thymidine kinase family. Homotetramer.

It localises to the cytoplasm. It carries out the reaction thymidine + ATP = dTMP + ADP + H(+). The sequence is that of Thymidine kinase from Lactococcus lactis subsp. lactis (strain IL1403) (Streptococcus lactis).